Consider the following 150-residue polypeptide: Transcriptional regulator MraZ (150 aa).

2 consecutive SpoVT-AbrB domains span residues 5 to 51 and 80 to 123; these read VANL…PQPE and ATEC…DEDT.

The protein belongs to the MraZ family. Forms oligomers.

It is found in the cytoplasm. The protein localises to the nucleoid. The sequence is that of Transcriptional regulator MraZ from Thioalkalivibrio sulfidiphilus (strain HL-EbGR7).